Here is a 310-residue protein sequence, read N- to C-terminus: Methionyl-tRNA formyltransferase (310 aa).

Residue 109–112 (SLLP) participates in (6S)-5,6,7,8-tetrahydrofolate binding.

It belongs to the Fmt family.

The enzyme catalyses L-methionyl-tRNA(fMet) + (6R)-10-formyltetrahydrofolate = N-formyl-L-methionyl-tRNA(fMet) + (6S)-5,6,7,8-tetrahydrofolate + H(+). Attaches a formyl group to the free amino group of methionyl-tRNA(fMet). The formyl group appears to play a dual role in the initiator identity of N-formylmethionyl-tRNA by promoting its recognition by IF2 and preventing the misappropriation of this tRNA by the elongation apparatus. The chain is Methionyl-tRNA formyltransferase from Pseudomonas putida (strain ATCC 47054 / DSM 6125 / CFBP 8728 / NCIMB 11950 / KT2440).